The primary structure comprises 78 residues: Exodeoxyribonuclease 7 small subunit (78 aa).

This sequence belongs to the XseB family. As to quaternary structure, heterooligomer composed of large and small subunits.

The protein localises to the cytoplasm. The catalysed reaction is Exonucleolytic cleavage in either 5'- to 3'- or 3'- to 5'-direction to yield nucleoside 5'-phosphates.. Bidirectionally degrades single-stranded DNA into large acid-insoluble oligonucleotides, which are then degraded further into small acid-soluble oligonucleotides. The protein is Exodeoxyribonuclease 7 small subunit of Idiomarina loihiensis (strain ATCC BAA-735 / DSM 15497 / L2-TR).